The chain runs to 37 residues: Large ribosomal subunit protein bL36A (37 aa).

This sequence belongs to the bacterial ribosomal protein bL36 family.

In Actinobacillus pleuropneumoniae serotype 5b (strain L20), this protein is Large ribosomal subunit protein bL36A.